The sequence spans 310 residues: Putative S-adenosyl-L-methionine-dependent methyltransferase Mvan_1346 (310 aa).

Residues D136 and 165–166 (DL) contribute to the S-adenosyl-L-methionine site.

This sequence belongs to the UPF0677 family.

Its function is as follows. Exhibits S-adenosyl-L-methionine-dependent methyltransferase activity. The polypeptide is Putative S-adenosyl-L-methionine-dependent methyltransferase Mvan_1346 (Mycolicibacterium vanbaalenii (strain DSM 7251 / JCM 13017 / BCRC 16820 / KCTC 9966 / NRRL B-24157 / PYR-1) (Mycobacterium vanbaalenii)).